The primary structure comprises 563 residues: MAKLLSFSDESRGALEKGVNNLANALKVTIGPKGRNVVIEKKFGAPDIVNDGVTIAKEIDLEDPFENIGAKLIEQVASKTKEKAGDGTTTATVLAQFMVQEGLRNTAAGASPIELRRGMEKAVAQIVDDLKKKSKSVSGDAIKQVATVSAGGDEEIGSMIADAIDKVSFDGVITVEESKSLATELDITEGMAFDRGYSSPYFVTDEDRLICEFENPSILITDKKISSIADLIPVLETVQKNGTPLIILAEEVEGEALATLVVNKNRGVLQVAAVRAPSFGERRKAALGDIAVLTGGTLISEDKAMSLEKVQISDLGQARRVTITKDSTTIVANDNQNTELSNRIASIKRELDETDSEYDQEKLNERIAKLAGGVAVIKVGAPTETELKNRKLRIEDALNATRAAIEEGIVAGGGTTLLELSEGLGDLAKKLEGDQKTGVEIIKRALTAPTKQIAINAGFNGDVVVSDIKRLGKGFNAQTGEYVDLLEAGILDASKVIRLALQDAVSIASLLITTEVVIADKPEPPSAPGAEGGDPMGGMGGMGGMGGMGGMGGMGGMGMPGMM.

ATP contacts are provided by residues 29 to 32 (TIGP), 86 to 90 (DGTTT), Gly-413, and Asp-492. The disordered stretch occupies residues 520–541 (DKPEPPSAPGAEGGDPMGGMGG). Gly residues predominate over residues 530 to 541 (AEGGDPMGGMGG).

The protein belongs to the chaperonin (HSP60) family. Forms a cylinder of 14 subunits composed of two heptameric rings stacked back-to-back. Interacts with the co-chaperonin GroES.

The protein resides in the cytoplasm. The catalysed reaction is ATP + H2O + a folded polypeptide = ADP + phosphate + an unfolded polypeptide.. Its function is as follows. Together with its co-chaperonin GroES, plays an essential role in assisting protein folding. The GroEL-GroES system forms a nano-cage that allows encapsulation of the non-native substrate proteins and provides a physical environment optimized to promote and accelerate protein folding. This Prochlorococcus marinus (strain NATL1A) protein is Chaperonin GroEL 1.